A 173-amino-acid polypeptide reads, in one-letter code: Peptide deformylase (173 aa).

Positions 91 and 133 each coordinate Fe cation. The active site involves E134. H137 provides a ligand contact to Fe cation.

It belongs to the polypeptide deformylase family. It depends on Fe(2+) as a cofactor.

It carries out the reaction N-terminal N-formyl-L-methionyl-[peptide] + H2O = N-terminal L-methionyl-[peptide] + formate. Removes the formyl group from the N-terminal Met of newly synthesized proteins. Requires at least a dipeptide for an efficient rate of reaction. N-terminal L-methionine is a prerequisite for activity but the enzyme has broad specificity at other positions. This chain is Peptide deformylase, found in Buchnera aphidicola subsp. Acyrthosiphon pisum (strain 5A).